Here is an 872-residue protein sequence, read N- to C-terminus: Alanine--tRNA ligase (872 aa).

H563, H567, C665, and H669 together coordinate Zn(2+).

Belongs to the class-II aminoacyl-tRNA synthetase family. Zn(2+) serves as cofactor.

Its subcellular location is the cytoplasm. It carries out the reaction tRNA(Ala) + L-alanine + ATP = L-alanyl-tRNA(Ala) + AMP + diphosphate. Functionally, catalyzes the attachment of alanine to tRNA(Ala) in a two-step reaction: alanine is first activated by ATP to form Ala-AMP and then transferred to the acceptor end of tRNA(Ala). Also edits incorrectly charged Ser-tRNA(Ala) and Gly-tRNA(Ala) via its editing domain. This is Alanine--tRNA ligase from Bacteroides fragilis (strain ATCC 25285 / DSM 2151 / CCUG 4856 / JCM 11019 / LMG 10263 / NCTC 9343 / Onslow / VPI 2553 / EN-2).